The following is a 256-amino-acid chain: Agamous-like MADS-box protein AGL18 (256 aa).

Residues M1–C61 form the MADS-box domain. Positions N94 to G184 constitute a K-box domain. The segment at E179–G232 is disordered. Residues P199–N215 show a composition bias toward acidic residues. A compositionally biased stretch (polar residues) spans T222 to G232.

As to expression, mostly expressed in pollen, roots, flowers and siliques, and to a lower extent, in stems and leaves. Expressed in the endosperm and in developing male and female gametophytes. Also present in seedlings.

The protein resides in the nucleus. In terms of biological role, probable transcription factor involved in the negative regulation of flowering, probably through the photoperiodic pathway. Prevents premature flowering. Downstream regulator of a subset of the MIKC* MADS-controlled genes required during pollen maturation. The sequence is that of Agamous-like MADS-box protein AGL18 (AGL18) from Arabidopsis thaliana (Mouse-ear cress).